A 177-amino-acid polypeptide reads, in one-letter code: R-phycoerythrin beta chain (177 aa).

The phycourobilin site is built by Cys50 and Cys61. An N4-methylasparagine modification is found at Asn72. Residues Cys82 and Cys158 each coordinate (2R,3E)-phycoerythrobilin.

It belongs to the phycobiliprotein family. In terms of assembly, heterodimer of an alpha and a beta chain. In terms of processing, contains two covalently linked phycoerythrobilin chromophores and one covalently linked phycourobilin chromophore.

It localises to the plastid. Its subcellular location is the chloroplast thylakoid membrane. Functionally, light-harvesting photosynthetic bile pigment-protein from the phycobiliprotein complex. The polypeptide is R-phycoerythrin beta chain (cpeB) (Lophosiphonia boldii (Red alga)).